A 366-amino-acid polypeptide reads, in one-letter code: MKKRKLILEDGTVFNGTAFGSDAESSGEIVFNTGMTGYQEVITDPSYCGQFVTLTYPLIGNYGINRDDFETVTPFIHGLVVKEYSEFPSNFRNEETLDEFLQAHNIPGIANIDTRKLTRIIRKHGTMRAVMVDEQKNEQHVIEQLRLAEMPRDQVKRTSTIKPYVVPGRGLRVVMVDFGAKHGILRELTRRDCHITVVPHNYSAEAILRLKPDGIMLTNGPGDPKDVPEAIEMIKQLLGQIPIFGICLGHQLLALACGADTEKMKFGHRGANHPVKDLLAGKTYLTSQNHSYAVNVSSLVNTDLELTQIALNDDTVEGIRHTAFPAFSVQYHPEASPGPEDTNFLFDEFLNLIKASKVKQGGEVYA.

Positions 1–171 (MKKRKLILED…KPYVVPGRGL (171 aa)) are CPSase. Residues serine 46, glycine 220, and glycine 222 each contribute to the L-glutamine site. The 188-residue stretch at 172–359 (RVVMVDFGAK…LNLIKASKVK (188 aa)) folds into the Glutamine amidotransferase type-1 domain. Cysteine 247 functions as the Nucleophile in the catalytic mechanism. Positions 248, 251, 289, and 292 each coordinate L-glutamine. Catalysis depends on residues histidine 332 and glutamate 334.

This sequence belongs to the CarA family. In terms of assembly, composed of two chains; the small (or glutamine) chain promotes the hydrolysis of glutamine to ammonia, which is used by the large (or ammonia) chain to synthesize carbamoyl phosphate. Tetramer of heterodimers (alpha,beta)4.

The catalysed reaction is hydrogencarbonate + L-glutamine + 2 ATP + H2O = carbamoyl phosphate + L-glutamate + 2 ADP + phosphate + 2 H(+). It carries out the reaction L-glutamine + H2O = L-glutamate + NH4(+). It functions in the pathway amino-acid biosynthesis; L-arginine biosynthesis; carbamoyl phosphate from bicarbonate: step 1/1. Its pathway is pyrimidine metabolism; UMP biosynthesis via de novo pathway; (S)-dihydroorotate from bicarbonate: step 1/3. Its function is as follows. Small subunit of the glutamine-dependent carbamoyl phosphate synthetase (CPSase). CPSase catalyzes the formation of carbamoyl phosphate from the ammonia moiety of glutamine, carbonate, and phosphate donated by ATP, constituting the first step of 2 biosynthetic pathways, one leading to arginine and/or urea and the other to pyrimidine nucleotides. The small subunit (glutamine amidotransferase) binds and cleaves glutamine to supply the large subunit with the substrate ammonia. The protein is Carbamoyl phosphate synthase small chain of Oceanobacillus iheyensis (strain DSM 14371 / CIP 107618 / JCM 11309 / KCTC 3954 / HTE831).